A 184-amino-acid polypeptide reads, in one-letter code: NADH-quinone oxidoreductase subunit B (184 aa).

[4Fe-4S] cluster-binding residues include cysteine 37, cysteine 38, cysteine 103, and cysteine 132.

Belongs to the complex I 20 kDa subunit family. As to quaternary structure, NDH-1 is composed of 14 different subunits. Subunits NuoB, C, D, E, F, and G constitute the peripheral sector of the complex. It depends on [4Fe-4S] cluster as a cofactor.

The protein localises to the cell membrane. It catalyses the reaction a quinone + NADH + 5 H(+)(in) = a quinol + NAD(+) + 4 H(+)(out). Its function is as follows. NDH-1 shuttles electrons from NADH, via FMN and iron-sulfur (Fe-S) centers, to quinones in the respiratory chain. The immediate electron acceptor for the enzyme in this species is believed to be a menaquinone. Couples the redox reaction to proton translocation (for every two electrons transferred, four hydrogen ions are translocated across the cytoplasmic membrane), and thus conserves the redox energy in a proton gradient. The protein is NADH-quinone oxidoreductase subunit B of Rhodococcus opacus (strain B4).